A 697-amino-acid chain; its full sequence is Elongation factor G (697 aa).

Residues 8–282 (EDYRNIGIMA…AIVDYLPSPL (275 aa)) form the tr-type G domain. GTP is bound by residues 17-24 (AHIDAGKT), 81-85 (DTPGH), and 135-138 (NKMD).

The protein belongs to the TRAFAC class translation factor GTPase superfamily. Classic translation factor GTPase family. EF-G/EF-2 subfamily.

Its subcellular location is the cytoplasm. In terms of biological role, catalyzes the GTP-dependent ribosomal translocation step during translation elongation. During this step, the ribosome changes from the pre-translocational (PRE) to the post-translocational (POST) state as the newly formed A-site-bound peptidyl-tRNA and P-site-bound deacylated tRNA move to the P and E sites, respectively. Catalyzes the coordinated movement of the two tRNA molecules, the mRNA and conformational changes in the ribosome. The polypeptide is Elongation factor G (Metamycoplasma arthritidis (strain 158L3-1) (Mycoplasma arthritidis)).